A 582-amino-acid chain; its full sequence is Acylamino-acid-releasing enzyme (582 aa).

Active-site charge relay system residues include Ser445, Asp524, and His556.

It belongs to the peptidase S9C family.

Its subcellular location is the cytoplasm. The catalysed reaction is Cleavage of an N-acetyl or N-formyl amino acid from the N-terminus of a polypeptide.. Functionally, this enzyme catalyzes the hydrolysis of the N-terminal peptide bond of an N-acetylated peptide to generate an N-acetylated amino acid and a peptide with a free N-terminus. This Aeropyrum pernix (strain ATCC 700893 / DSM 11879 / JCM 9820 / NBRC 100138 / K1) protein is Acylamino-acid-releasing enzyme.